Consider the following 361-residue polypeptide: Outer membrane protein P2 (361 aa).

The N-terminal stretch at 1–20 is a signal peptide; it reads MKKTLAALIVGAFAASAANA.

The protein belongs to the Gram-negative porin family. Homotrimer.

It localises to the cell outer membrane. Its function is as follows. Forms pores that allow passive diffusion of small molecules across the outer membrane. In Haemophilus influenzae, this protein is Outer membrane protein P2 (ompP2).